The following is a 107-amino-acid chain: Phosphoribosyl-ATP pyrophosphatase (107 aa).

Belongs to the PRA-PH family.

The protein localises to the cytoplasm. The enzyme catalyses 1-(5-phospho-beta-D-ribosyl)-ATP + H2O = 1-(5-phospho-beta-D-ribosyl)-5'-AMP + diphosphate + H(+). The protein operates within amino-acid biosynthesis; L-histidine biosynthesis; L-histidine from 5-phospho-alpha-D-ribose 1-diphosphate: step 2/9. The chain is Phosphoribosyl-ATP pyrophosphatase from Nitrobacter hamburgensis (strain DSM 10229 / NCIMB 13809 / X14).